Consider the following 1057-residue polypeptide: Probable E3 ubiquitin-protein ligase HERC4 (1057 aa).

RCC1 repeat units follow at residues 1-51, 52-101, 102-154, 156-207, 208-259, 261-311, and 313-366; these read MLCW…FVLD, DGTV…ALND, KGQV…ALSK, SEVF…VLTL, SGAI…ALTK, GGVF…AFVP, and SGRI…CVKR. The HECT domain occupies 730-1057; sequence KNIDYKKPLK…IDHNEGFSLI (328 aa). Cysteine 1025 acts as the Glycyl thioester intermediate in catalysis.

The protein resides in the cytoplasm. Its subcellular location is the cytosol. It catalyses the reaction S-ubiquitinyl-[E2 ubiquitin-conjugating enzyme]-L-cysteine + [acceptor protein]-L-lysine = [E2 ubiquitin-conjugating enzyme]-L-cysteine + N(6)-ubiquitinyl-[acceptor protein]-L-lysine.. It participates in protein modification; protein ubiquitination. Functionally, probable E3 ubiquitin-protein ligase involved in either protein trafficking or in the distribution of cellular structures. Required for spermatozoon maturation and fertility, and for the removal of the cytoplasmic droplet of the spermatozoon. E3 ubiquitin-protein ligases accept ubiquitin from an E2 ubiquitin-conjugating enzyme in the form of a thioester and then directly transfer it to targeted substrates. This chain is Probable E3 ubiquitin-protein ligase HERC4 (Herc4), found in Rattus norvegicus (Rat).